We begin with the raw amino-acid sequence, 211 residues long: Octanoyltransferase (211 aa).

A BPL/LPL catalytic domain is found at 32–207 (PCTYDEIWFV…ELSKFLEIFI (176 aa)). Residues 71 to 78 (RGGQITYH), 138 to 140 (SLG), and 151 to 153 (GLA) each bind substrate. Cysteine 169 serves as the catalytic Acyl-thioester intermediate.

The protein belongs to the LipB family.

The protein localises to the cytoplasm. It catalyses the reaction octanoyl-[ACP] + L-lysyl-[protein] = N(6)-octanoyl-L-lysyl-[protein] + holo-[ACP] + H(+). It participates in protein modification; protein lipoylation via endogenous pathway; protein N(6)-(lipoyl)lysine from octanoyl-[acyl-carrier-protein]: step 1/2. Its function is as follows. Catalyzes the transfer of endogenously produced octanoic acid from octanoyl-acyl-carrier-protein onto the lipoyl domains of lipoate-dependent enzymes. Lipoyl-ACP can also act as a substrate although octanoyl-ACP is likely to be the physiological substrate. The protein is Octanoyltransferase of Buchnera aphidicola subsp. Acyrthosiphon pisum (strain APS) (Acyrthosiphon pisum symbiotic bacterium).